The chain runs to 820 residues: 1,4-alpha-glucan-branching enzyme, chloroplastic/amyloplastic (820 aa).

A compositionally biased stretch (low complexity) spans 1–20; that stretch reads MLCLTSSSSSAPAPLLPSLA. A disordered region spans residues 1–28; sequence MLCLTSSSSSAPAPLLPSLADRPSPGIA. Residues 1–64 constitute a chloroplast transit peptide; the sequence is MLCLTSSSSS…SVPATARKNK (64 aa). (1,4-alpha-D-glucosyl)n-binding residues include W153 and K188. D409 functions as the Nucleophile in the catalytic mechanism. E464 (proton donor) is an active-site residue.

Belongs to the glycosyl hydrolase 13 family. GlgB subfamily. In terms of assembly, monomer.

The protein localises to the plastid. Its subcellular location is the chloroplast. The protein resides in the amyloplast. It carries out the reaction Transfers a segment of a (1-&gt;4)-alpha-D-glucan chain to a primary hydroxy group in a similar glucan chain.. It participates in glycan biosynthesis; starch biosynthesis. Catalyzes the formation of the alpha-1,6-glucosidic linkages in starch by scission of a 1,4-alpha-linked oligosaccharide from growing alpha-1,4-glucan chains and the subsequent attachment of the oligosaccharide to the alpha-1,6 position. This chain is 1,4-alpha-glucan-branching enzyme, chloroplastic/amyloplastic (SBE1), found in Oryza sativa subsp. japonica (Rice).